A 138-amino-acid polypeptide reads, in one-letter code: ATP synthase epsilon chain (138 aa).

This sequence belongs to the ATPase epsilon chain family. F-type ATPases have 2 components, CF(1) - the catalytic core - and CF(0) - the membrane proton channel. CF(1) has five subunits: alpha(3), beta(3), gamma(1), delta(1), epsilon(1). CF(0) has three main subunits: a, b and c.

It is found in the cell inner membrane. Its function is as follows. Produces ATP from ADP in the presence of a proton gradient across the membrane. The chain is ATP synthase epsilon chain from Geotalea daltonii (strain DSM 22248 / JCM 15807 / FRC-32) (Geobacter daltonii).